We begin with the raw amino-acid sequence, 401 residues long: Beta-ketoadipyl-CoA thiolase (401 aa).

Cys-91 functions as the Acyl-thioester intermediate in the catalytic mechanism. Active-site proton acceptor residues include His-357 and Cys-387.

The protein belongs to the thiolase-like superfamily. Thiolase family. Homotetramer.

The catalysed reaction is succinyl-CoA + acetyl-CoA = 3-oxoadipyl-CoA + CoA. The protein operates within aromatic compound metabolism; beta-ketoadipate pathway; acetyl-CoA and succinyl-CoA from 3-oxoadipate: step 2/2. In terms of biological role, catalyzes thiolytic cleavage of beta-ketoadipyl-CoA to succinyl-CoA and acetyl-CoA. This Pseudomonas knackmussii (strain DSM 6978 / CCUG 54928 / LMG 23759 / B13) protein is Beta-ketoadipyl-CoA thiolase (pcaF).